The following is a 410-amino-acid chain: Serine hydroxymethyltransferase (410 aa).

Residues L119 and 123-125 (GHL) contribute to the (6S)-5,6,7,8-tetrahydrofolate site. K228 carries the post-translational modification N6-(pyridoxal phosphate)lysine. 351 to 353 (SPF) is a (6S)-5,6,7,8-tetrahydrofolate binding site.

It belongs to the SHMT family. As to quaternary structure, homodimer. Requires pyridoxal 5'-phosphate as cofactor.

It localises to the cytoplasm. It catalyses the reaction (6R)-5,10-methylene-5,6,7,8-tetrahydrofolate + glycine + H2O = (6S)-5,6,7,8-tetrahydrofolate + L-serine. Its pathway is one-carbon metabolism; tetrahydrofolate interconversion. The protein operates within amino-acid biosynthesis; glycine biosynthesis; glycine from L-serine: step 1/1. Catalyzes the reversible interconversion of serine and glycine with tetrahydrofolate (THF) serving as the one-carbon carrier. This reaction serves as the major source of one-carbon groups required for the biosynthesis of purines, thymidylate, methionine, and other important biomolecules. Also exhibits THF-independent aldolase activity toward beta-hydroxyamino acids, producing glycine and aldehydes, via a retro-aldol mechanism. This is Serine hydroxymethyltransferase from Alkaliphilus oremlandii (strain OhILAs) (Clostridium oremlandii (strain OhILAs)).